The primary structure comprises 557 residues: Laccase-11 (557 aa).

Residues 1-23 (MKMGFLFLFCYLLAFLGYSPVDA) form the signal peptide. Plastocyanin-like domains are found at residues 31-147 (DVQV…PAPG) and 158-308 (ESNI…YKGV). 3 N-linked (GlcNAc...) asparagine glycosylation sites follow: Asn36, Asn69, and Asn77. 2 residues coordinate Cu cation: His81 and His83. Residue Asn115 is glycosylated (N-linked (GlcNAc...) asparagine). Cu cation is bound by residues His126 and His128. Asn240, Asn296, Asn323, Asn371, Asn381, Asn398, Asn416, and Asn440 each carry an N-linked (GlcNAc...) asparagine glycan. The Plastocyanin-like 3 domain maps to 406-541 (DFPDRPPKAF…KMAFVVENGE (136 aa)). The Cu cation site is built by His458, His461, His463, His520, Cys521, His522, and His526.

The protein belongs to the multicopper oxidase family. It depends on Cu cation as a cofactor. In terms of tissue distribution, ubiquitous and constitutive.

The protein localises to the secreted. Its subcellular location is the extracellular space. The protein resides in the apoplast. The catalysed reaction is 4 hydroquinone + O2 = 4 benzosemiquinone + 2 H2O. Lignin degradation and detoxification of lignin-derived products. In Arabidopsis thaliana (Mouse-ear cress), this protein is Laccase-11 (LAC11).